Consider the following 72-residue polypeptide: MAQQSRSRSNNNNDLLIPQAASAIEQMKLEIASEFGVQLGAETTSRANGSVGGEITKRLVRLAQQNMGGQFH.

Belongs to the alpha/beta-type SASP family.

SASP are bound to spore DNA. They are double-stranded DNA-binding proteins that cause DNA to change to an a-like conformation. They protect the DNA backbone from chemical and enzymatic cleavage and are thus involved in dormant spore's high resistance to UV light. This is Small, acid-soluble spore protein C (sspC) from Bacillus subtilis (strain 168).